A 131-amino-acid polypeptide reads, in one-letter code: Small ribosomal subunit protein uS11 (131 aa).

A compositionally biased stretch (basic residues) spans 1 to 15; sequence MAAKTVKKTRRRKER. The interval 1–23 is disordered; sequence MAAKTVKKTRRRKERKNVEHGAA.

The protein belongs to the universal ribosomal protein uS11 family. In terms of assembly, part of the 30S ribosomal subunit. Interacts with proteins S7 and S18. Binds to IF-3.

Functionally, located on the platform of the 30S subunit, it bridges several disparate RNA helices of the 16S rRNA. Forms part of the Shine-Dalgarno cleft in the 70S ribosome. This Clostridium beijerinckii (strain ATCC 51743 / NCIMB 8052) (Clostridium acetobutylicum) protein is Small ribosomal subunit protein uS11.